The chain runs to 145 residues: Deoxyuridine 5'-triphosphate nucleotidohydrolase (145 aa).

Substrate-binding positions include 64-66, asparagine 77, 81-83, and methionine 91; these read RSG and TID.

The protein belongs to the dUTPase family. Requires Mg(2+) as cofactor.

The enzyme catalyses dUTP + H2O = dUMP + diphosphate + H(+). Its pathway is pyrimidine metabolism; dUMP biosynthesis; dUMP from dCTP (dUTP route): step 2/2. Functionally, this enzyme is involved in nucleotide metabolism: it produces dUMP, the immediate precursor of thymidine nucleotides and it decreases the intracellular concentration of dUTP so that uracil cannot be incorporated into DNA. The chain is Deoxyuridine 5'-triphosphate nucleotidohydrolase from Leptospira interrogans serogroup Icterohaemorrhagiae serovar copenhageni (strain Fiocruz L1-130).